The sequence spans 82 residues: ATP synthase subunit c, chloroplastic (82 aa).

An N-formylmethionine modification is found at Met-1. 2 consecutive transmembrane segments (helical) span residues 3–23 and 57–77; these read PIVA…AAIG and FAFM…LLFA.

It belongs to the ATPase C chain family. As to quaternary structure, F-type ATPases have 2 components, F(1) - the catalytic core - and F(0) - the membrane proton channel. F(1) has five subunits: alpha(3), beta(3), gamma(1), delta(1), epsilon(1). F(0) has four main subunits: a(1), b(1), b'(1) and c(10-14). The alpha and beta chains form an alternating ring which encloses part of the gamma chain. F(1) is attached to F(0) by a central stalk formed by the gamma and epsilon chains, while a peripheral stalk is formed by the delta, b and b' chains.

It is found in the plastid. Its subcellular location is the chloroplast thylakoid membrane. Functionally, f(1)F(0) ATP synthase produces ATP from ADP in the presence of a proton or sodium gradient. F-type ATPases consist of two structural domains, F(1) containing the extramembraneous catalytic core and F(0) containing the membrane proton channel, linked together by a central stalk and a peripheral stalk. During catalysis, ATP synthesis in the catalytic domain of F(1) is coupled via a rotary mechanism of the central stalk subunits to proton translocation. Key component of the F(0) channel; it plays a direct role in translocation across the membrane. A homomeric c-ring of between 10-14 subunits forms the central stalk rotor element with the F(1) delta and epsilon subunits. This chain is ATP synthase subunit c, chloroplastic, found in Chlamydomonas reinhardtii (Chlamydomonas smithii).